We begin with the raw amino-acid sequence, 354 residues long: Uroporphyrinogen decarboxylase (354 aa).

Substrate is bound by residues Arg27–Arg31, Asp77, Tyr154, Ser209, and His327.

The protein belongs to the uroporphyrinogen decarboxylase family. Homodimer.

It localises to the cytoplasm. The catalysed reaction is uroporphyrinogen III + 4 H(+) = coproporphyrinogen III + 4 CO2. It functions in the pathway porphyrin-containing compound metabolism; protoporphyrin-IX biosynthesis; coproporphyrinogen-III from 5-aminolevulinate: step 4/4. Its function is as follows. Catalyzes the decarboxylation of four acetate groups of uroporphyrinogen-III to yield coproporphyrinogen-III. In Pseudomonas syringae pv. syringae (strain B728a), this protein is Uroporphyrinogen decarboxylase.